A 110-amino-acid polypeptide reads, in one-letter code: Translation initiation factor 1A 3 (110 aa).

Residues 1 to 29 are disordered; sequence MIRKRQSGSNKSVSSGNNQEVTRVRTPRK. The span at 7–18 shows a compositional bias: low complexity; the sequence is SGSNKSVSSGNN. The 75-residue stretch at 22 to 96 folds into the S1-like domain; it reads TRVRTPRKDR…SKADVIWKYT (75 aa).

The protein belongs to the eIF-1A family.

Functionally, seems to be required for maximal rate of protein biosynthesis. Enhances ribosome dissociation into subunits and stabilizes the binding of the initiator Met-tRNA(I) to 40 S ribosomal subunits. The protein is Translation initiation factor 1A 3 (eIF1A3) of Methanosarcina acetivorans (strain ATCC 35395 / DSM 2834 / JCM 12185 / C2A).